Here is a 570-residue protein sequence, read N- to C-terminus: Putative periplasmic trehalase (570 aa).

An N-terminal signal peptide occupies residues 1 to 34; sequence MIPPEIRRSVLLQKAIKLALAGTLLTFASFSATA. Residues arginine 159, 166-167, asparagine 203, 212-214, 284-286, and glycine 317 each bind substrate; these read WD, RSQ, and RPE. Residues aspartate 319 and glutamate 503 each act as proton donor/acceptor in the active site. Glutamate 518 lines the substrate pocket. The segment at 544–570 is disordered; that stretch reads KPCDSVPSTRPASLSATPTKTPSAATQ. Low complexity predominate over residues 554–570; it reads PASLSATPTKTPSAATQ.

This sequence belongs to the glycosyl hydrolase 37 family. Monomer.

The protein localises to the periplasm. It carries out the reaction alpha,alpha-trehalose + H2O = alpha-D-glucose + beta-D-glucose. Its function is as follows. Provides the cells with the ability to utilize trehalose at high osmolarity by splitting it into glucose molecules that can subsequently be taken up by the phosphotransferase-mediated uptake system. The chain is Putative periplasmic trehalase from Salmonella typhi.